The chain runs to 96 residues: UPF0235 protein YggU (96 aa).

This sequence belongs to the UPF0235 family.

This is UPF0235 protein YggU from Escherichia coli (strain K12 / MC4100 / BW2952).